We begin with the raw amino-acid sequence, 141 residues long: Large ribosomal subunit protein uL11 (141 aa).

Belongs to the universal ribosomal protein uL11 family. In terms of assembly, part of the ribosomal stalk of the 50S ribosomal subunit. Interacts with L10 and the large rRNA to form the base of the stalk. L10 forms an elongated spine to which L12 dimers bind in a sequential fashion forming a multimeric L10(L12)X complex. One or more lysine residues are methylated.

Its function is as follows. Forms part of the ribosomal stalk which helps the ribosome interact with GTP-bound translation factors. The chain is Large ribosomal subunit protein uL11 from Shouchella clausii (strain KSM-K16) (Alkalihalobacillus clausii).